Here is a 367-residue protein sequence, read N- to C-terminus: uncharacterized protein (367 aa).

A helical transmembrane segment spans residues 6 to 26; the sequence is IAAGVVVALAAVWCTSAWFTG.

This sequence to E.coli YdgA and YihF.

It localises to the membrane. This is an uncharacterized protein from Haemophilus influenzae (strain ATCC 51907 / DSM 11121 / KW20 / Rd).